The following is a 455-amino-acid chain: Rho GTPase-activating protein 3 (455 aa).

Over residues 1–12 (MTNFSRSKSTGT) the composition is skewed to polar residues. Residues 1–68 (MTNFSRSKST…HASRSGNGSG (68 aa)) form a disordered region. A compositionally biased stretch (basic and acidic residues) spans 24 to 33 (GPDKYENIHN). Residues 43–54 (STTSTDYYDAST) show a composition bias toward low complexity. The segment covering 55 to 64 (PLSSHASRSG) has biased composition (polar residues). Residues 105-118 (IGWPTEVKHVSHVT) enclose the CRIB domain. Positions 153-331 (KSMQCSYDDR…LILMNLKERE (179 aa)) constitute a Rho-GAP domain. 2 disordered regions span residues 342 to 366 (KQTS…KPNN) and 432 to 455 (FVSN…SLPW). Over residues 435 to 446 (NRDEGRKGREAW) the composition is skewed to basic and acidic residues.

Expressed in differentiating xylem cells.

It is found in the cell membrane. In terms of biological role, acts as a GTPase activator for the Rac-type GTPase by converting it to an inactive GDP-bound state. Involved in secondary wall pattern formation. In association with ROPGEF4, mediates local activation of ARAC10/ROP11 to initiate the distinct pattern of secondary cell walls in xylem cells. The protein is Rho GTPase-activating protein 3 (ROPGAP3) of Arabidopsis thaliana (Mouse-ear cress).